Consider the following 1017-residue polypeptide: Adhesion G-protein coupled receptor G2 (1017 aa).

The signal sequence occupies residues 1–37 (MVFSVRQCGHVGRTEEVLLTFKIFLVIICLHVVLVTS). The Extracellular portion of the chain corresponds to 38–627 (LEEDTDNSSL…TSVLPAQMMA (590 aa)). Residues asparagine 44, asparagine 85, asparagine 99, asparagine 111, asparagine 117, asparagine 144, asparagine 162, asparagine 186, and asparagine 194 are each glycosylated (N-linked (GlcNAc...) asparagine). The tract at residues 301–366 (PLSPQPSAPI…NTTSAPPVQT (66 aa)) is disordered. Over residues 308 to 320 (APIASSPAIDMPP) the composition is skewed to low complexity. 2 stretches are compositionally biased toward polar residues: residues 321–335 (QSET…THVS) and 344–366 (SFSS…PVQT). N-linked (GlcNAc...) asparagine glycans are attached at residues asparagine 357, asparagine 370, asparagine 435, asparagine 438, asparagine 456, asparagine 461, asparagine 528, asparagine 542, asparagine 547, asparagine 551, and asparagine 597. Residues 462–619 (TTTFVAQDPA…GVLLDLSRTS (158 aa)) enclose the GAIN-B domain. Cystine bridges form between cysteine 570/cysteine 601 and cysteine 589/cysteine 603. The segment at 570–619 (CVFWDLGRNGGRGGWSDNGCSVKDRRLNETICTCSHLTSFGVLLDLSRTS) is GPS. The tract at residues 608-619 (SFGVLLDLSRTS) is stachel. A helical membrane pass occupies residues 628–648 (LTFITYIGCGLSSIFLSVTLV). Over 649–667 (TYIAFEKIRRDYPSKILIQ) the chain is Cytoplasmic. The chain crosses the membrane as a helical span at residues 668–688 (LCAALLLLNLVFLLDSWIALY). Over 689–693 (KMQGL) the chain is Extracellular. The chain crosses the membrane as a helical span at residues 694–714 (CISVAVFLHYFLLVSFTWMGL). Cysteines 694 and 778 form a disulfide. The Cytoplasmic portion of the chain corresponds to 715-737 (EAFHMYLALVKVFNTYIRKYILK). The helical transmembrane segment at 738–758 (FCIVGWGVPAVVVTIILTISP) threads the bilayer. Residues 759 to 789 (DNYGLGSYGKFPNGSPDDFCWINNNAVFYIT) are Extracellular-facing. Residues 790-810 (VVGYFCVIFLLNVSMFIVVLV) traverse the membrane as a helical segment. Over 811–834 (QLCRIKKKKQLGAQRKTSIQDLRS) the chain is Cytoplasmic. A helical transmembrane segment spans residues 835–855 (IAGLTFLLGITWGFAFFAWGP). Residues 856 to 857 (VN) lie on the Extracellular side of the membrane. Asparagine 857 carries N-linked (GlcNAc...) asparagine glycosylation. The helical transmembrane segment at 858–878 (VTFMYLFAIFNTLQGFFIFIF) threads the bilayer. A 3beta-hydroxyandrost-5-en-17-one-binding site is contributed by asparagine 868. Residues 879–1017 (YCVAKENVRK…RGSLHFIEQM (139 aa)) are Cytoplasmic-facing. The tract at residues 918-939 (QTVNQGVSSSSNSLQSSSNSTN) is disordered. Position 1010 is a phosphoserine (serine 1010).

Belongs to the G-protein coupled receptor 2 family. Adhesion G-protein coupled receptor (ADGR) subfamily. Heterodimer of 2 chains generated by proteolytic processing; the large extracellular N-terminal fragment and the membrane-bound C-terminal fragment predominantly remain associated and non-covalently linked. Interacts with CFTR. Proteolytically cleaved into 2 subunits, an extracellular subunit and a seven-transmembrane subunit. Post-translationally, highly glycosylated. Epididymis-specific expression (at protein level). Both subunits are associated with apical membranes of efferent ductule and proximal epididymal duct epithelia. Mainly expressed in the nonciliated principal cells of the proximal excurrent ducts. Specifically over-expressed in Ewing sarcomas but also up-regulated in a number of carcinomas derived from prostate, kidney or lung.

The protein resides in the apical cell membrane. Its activity is regulated as follows. Forms a heterodimer of 2 chains generated by proteolytic processing that remain associated through non-covalent interactions mediated by the GAIN-B domain. In the inactivated receptor, the Stachel sequence (also named stalk) is embedded in the GAIN-B domain, where it adopts a beta-strand conformation. On activation, the Stachel moves into the 7 transmembrane region and adopts a twisted hook-shaped configuration that forms contacts within the receptor, leading to coupling of a G-alpha protein, which activates signaling. The cleaved GAIN-B and N-terminal domains can then dissociate from the rest of the receptor. Deoxycorticosterone (DOC) acts as an antagonist of ADGRG2. Functionally, adhesion G-protein coupled receptor (aGPCR) for steroid hormones, such as dehydroepiandrosterone (DHEA; also named 3beta-hydroxyandrost-5-en-17-one) and androstenedione. Involved in a signal transduction pathway controlling epididymal function and male fertility. Ligand binding causes a conformation change that triggers signaling via guanine nucleotide-binding proteins (G proteins) and modulates the activity of downstream effectors, such as adenylate cyclase. ADGRG2 is coupled to G(s) G proteins and mediates activation of adenylate cyclase activity. Also able to couple with G(q) G proteins in vitro. Together with CFTR, required to promote fluid reabsorption within efferent ductule. The sequence is that of Adhesion G-protein coupled receptor G2 from Homo sapiens (Human).